The primary structure comprises 111 residues: Cornifelin homolog (111 aa).

It belongs to the cornifelin family.

The sequence is that of Cornifelin homolog (cnfn) from Xenopus tropicalis (Western clawed frog).